Reading from the N-terminus, the 455-residue chain is MFS-type transporter SLC18B1 (455 aa).

Met-1 carries the post-translational modification N-acetylmethionine. Residues 1-26 form a disordered region; it reads MDTAGPPAPAGTEGDGPGGSTGETSR. Topologically, residues 1-32 are cytoplasmic; that stretch reads MDTAGPPAPAGTEGDGPGGSTGETSRRLSKEQ. Ser-20 bears the Phosphoserine mark. Residues 33 to 53 form a helical membrane-spanning segment; it reads IFVLVSAASMNLGCMMTYSIL. Over 54-69 the chain is Extracellular; sequence GPFFPKEAEKKGASNT. A helical transmembrane segment spans residues 70–90; the sequence is TIGMIFGCYALFELLASLVFG. The Cytoplasmic segment spans residues 91-99; sequence KYLVHIGAK. A helical membrane pass occupies residues 100-120; sequence FMFIAGMFVSGGVTILFGVLD. Over 121-126 the chain is Extracellular; sequence QLPEGP. Residues 127–147 form a helical membrane-spanning segment; the sequence is IFIAMCFLVRIVDAIGFGAAI. Residues 148 to 166 are Cytoplasmic-facing; it reads TASSSILAKAFPNNVATVM. The chain crosses the membrane as a helical span at residues 167–187; the sequence is GSLEVFSGLGLVAGPPLGGLL. Residues 188–194 lie on the Extracellular side of the membrane; it reads YQSFGYE. The chain crosses the membrane as a helical span at residues 195–215; it reads VPFIFLGCIVLLMIPLNLCIL. Residues 216–232 are Cytoplasmic-facing; sequence PSYESDAGKQSFWKLVT. The chain crosses the membrane as a helical span at residues 233–253; it reads LPKIGLIAFVIISLSSCFGFL. Residues 254–271 are Extracellular-facing; sequence DPTLSLFVMKKFSLSTGY. A helical membrane pass occupies residues 272 to 292; the sequence is VGLVFLGLSLSYAISSPLFGL. Over 293-303 the chain is Cytoplasmic; that stretch reads LSDKMPNLRKW. A helical membrane pass occupies residues 304–324; it reads FLVFGNLITAGCYMLLGPIPL. At 325–330 the chain is on the extracellular side; the sequence is LHIKSQ. The chain crosses the membrane as a helical span at residues 331–351; it reads LWLLVLVLVINGVSAGMSIIP. Topologically, residues 352–376 are cytoplasmic; that stretch reads TFPEMLSCAYANGFEDGISTLGLVS. Residues 377-397 form a helical membrane-spanning segment; it reads GLFGAMWSVGAFMGPILGGFL. Topologically, residues 398–406 are extracellular; the sequence is CEKIGFEWA. A helical transmembrane segment spans residues 407 to 427; that stretch reads AAIQGLWTLLSGVAMALFYLW. The Cytoplasmic portion of the chain corresponds to 428-455; it reads EDSTMRRSKAQNILGTEEEQAALLPNDT.

As to expression, expressed in brain structures, particularly in hippocampus, cortex, and cerebellum (at protein level). Expressed in astrocytes and hippocampal neurons (at protein level). Expressed in peritoneal mast cells.

Its subcellular location is the cytoplasmic vesicle. The protein resides in the secretory vesicle membrane. It is found in the secretory vesicle. The protein localises to the synaptic vesicle membrane. It carries out the reaction spermine(in) + n H(+)(out) = spermine(out) + n H(+)(in). It catalyses the reaction spermidine(in) + n H(+)(out) = spermidine(out) + n H(+)(in). The catalysed reaction is serotonin(in) + n H(+)(out) = serotonin(out) + n H(+)(in). Proton-coupled polyamine antiporter involved in the translocation of polyamines from cytosol into secretory vesicles prior to their release via exocytosis. Uses the electrochemical proton gradient generated by a V-type proton-pumping ATPase to couple the efflux of protons with the uptake of a polyamine molecule. Facilitates vesicular storage of spermine and spermidine in astrocytes with an impact on glutamatergic neuronal transmission and memory formation. Upon antigen stimulation, regulates polyamine accumulation and release in mast cell secretory granules, which in turn potentiates mast cell degranulation and histamine secretion. This is MFS-type transporter SLC18B1 from Rattus norvegicus (Rat).